The chain runs to 418 residues: Serine--tRNA ligase (418 aa).

227–229 (TSE) provides a ligand contact to L-serine. ATP is bound by residues 258-260 (RRE) and valine 274. An L-serine-binding site is contributed by glutamate 281. Residue 345–348 (ELTS) participates in ATP binding. Residue threonine 380 participates in L-serine binding.

The protein belongs to the class-II aminoacyl-tRNA synthetase family. Type-1 seryl-tRNA synthetase subfamily. In terms of assembly, homodimer. The tRNA molecule binds across the dimer.

The protein resides in the cytoplasm. The catalysed reaction is tRNA(Ser) + L-serine + ATP = L-seryl-tRNA(Ser) + AMP + diphosphate + H(+). The enzyme catalyses tRNA(Sec) + L-serine + ATP = L-seryl-tRNA(Sec) + AMP + diphosphate + H(+). It participates in aminoacyl-tRNA biosynthesis; selenocysteinyl-tRNA(Sec) biosynthesis; L-seryl-tRNA(Sec) from L-serine and tRNA(Sec): step 1/1. In terms of biological role, catalyzes the attachment of serine to tRNA(Ser). Is also able to aminoacylate tRNA(Sec) with serine, to form the misacylated tRNA L-seryl-tRNA(Sec), which will be further converted into selenocysteinyl-tRNA(Sec). The protein is Serine--tRNA ligase of Rhodococcus opacus (strain B4).